Here is a 243-residue protein sequence, read N- to C-terminus: Small ribosomal subunit protein uS3 (243 aa).

The KH type-2 domain maps to 39 to 107; it reads MRKFVMSELK…ETHLNIVEVR (69 aa). The disordered stretch occupies residues 214–243; it reads ASERRAMEGDAQGPASRDRDRDRDRRRDNA. Basic and acidic residues predominate over residues 229-243; it reads SRDRDRDRDRRRDNA.

It belongs to the universal ribosomal protein uS3 family. As to quaternary structure, part of the 30S ribosomal subunit. Forms a tight complex with proteins S10 and S14.

In terms of biological role, binds the lower part of the 30S subunit head. Binds mRNA in the 70S ribosome, positioning it for translation. The sequence is that of Small ribosomal subunit protein uS3 from Rhizobium leguminosarum bv. trifolii (strain WSM2304).